The following is a 302-amino-acid chain: Deoxyhypusine hydroxylase (302 aa).

HEAT-like PBS-type repeat units lie at residues 23–49 (ERFR…AFDD), 54–80 (LKHE…VLKD), 87–113 (VRHE…YKQD), 175–201 (DRYR…GLKD), 206–232 (FRHE…NLED), and 239–265 (VRHE…YAED). Fe cation contacts are provided by His-56, Glu-57, His-89, and Glu-90. Fe cation contacts are provided by His-208, Glu-209, His-241, and Glu-242.

Belongs to the deoxyhypusine hydroxylase family. Requires Fe(2+) as cofactor.

It localises to the endoplasmic reticulum membrane. The enzyme catalyses [eIF5A protein]-deoxyhypusine + AH2 + O2 = [eIF5A protein]-hypusine + A + H2O. It functions in the pathway protein modification; eIF5A hypusination. In terms of biological role, catalyzes the hydroxylation of the N(6)-(4-aminobutyl)-L-lysine intermediate to form hypusine, an essential post-translational modification only found in mature eIF-5A factor. Essential for organismal viability and plays a role in a wide number of important processes such as cell growth and proliferation, and regulates induction of autophagy and protein synthesis. Has a role in eIF-5A-mediated translational control. The polypeptide is Deoxyhypusine hydroxylase (Drosophila melanogaster (Fruit fly)).